Reading from the N-terminus, the 349-residue chain is N-acetyl-gamma-glutamyl-phosphate reductase (349 aa).

Cysteine 153 is an active-site residue.

The protein belongs to the NAGSA dehydrogenase family. Type 1 subfamily.

Its subcellular location is the cytoplasm. The enzyme catalyses N-acetyl-L-glutamate 5-semialdehyde + phosphate + NADP(+) = N-acetyl-L-glutamyl 5-phosphate + NADPH + H(+). It participates in amino-acid biosynthesis; L-arginine biosynthesis; N(2)-acetyl-L-ornithine from L-glutamate: step 3/4. Functionally, catalyzes the NADPH-dependent reduction of N-acetyl-5-glutamyl phosphate to yield N-acetyl-L-glutamate 5-semialdehyde. The sequence is that of N-acetyl-gamma-glutamyl-phosphate reductase from Magnetococcus marinus (strain ATCC BAA-1437 / JCM 17883 / MC-1).